The sequence spans 207 residues: B2 protein (207 aa).

The tract at residues 1–68 is disordered; it reads MIDQEESNFN…FKTLPPAESL (68 aa). Low complexity-rich tracts occupy residues 8–26 and 35–52; these read NFNF…QFHG and KNNN…GENK. The 133-residue stretch at 72–204 folds into the DCD domain; it reads ETVGGYIFVC…AISLLDIFEE (133 aa).

The protein is B2 protein of Daucus carota (Wild carrot).